The following is a 701-amino-acid chain: Polyribonucleotide nucleotidyltransferase (701 aa).

Positions 489 and 495 each coordinate Mg(2+). A KH domain is found at 556-615; sequence PRIHTMKIHPDKIREVIGSGGKVIRSITEETGCAIDIEDDGTIRIASSDQASAEQAVKII. An S1 motif domain is found at 625-693; that stretch reads GQVYEGKVVR…RQGRVKLTMK (69 aa).

Belongs to the polyribonucleotide nucleotidyltransferase family. Mg(2+) serves as cofactor.

The protein localises to the cytoplasm. It catalyses the reaction RNA(n+1) + phosphate = RNA(n) + a ribonucleoside 5'-diphosphate. In terms of biological role, involved in mRNA degradation. Catalyzes the phosphorolysis of single-stranded polyribonucleotides processively in the 3'- to 5'-direction. The sequence is that of Polyribonucleotide nucleotidyltransferase from Magnetococcus marinus (strain ATCC BAA-1437 / JCM 17883 / MC-1).